A 101-amino-acid chain; its full sequence is Integration host factor subunit alpha (101 aa).

It belongs to the bacterial histone-like protein family. Heterodimer of an alpha and a beta chain.

Its function is as follows. This protein is one of the two subunits of integration host factor, a specific DNA-binding protein that functions in genetic recombination as well as in transcriptional and translational control. The protein is Integration host factor subunit alpha of Dinoroseobacter shibae (strain DSM 16493 / NCIMB 14021 / DFL 12).